The following is a 104-amino-acid chain: Pterin-4-alpha-carbinolamine dehydratase (104 aa).

The residue at position 2 (alanine 2) is an N-acetylalanine. Substrate-binding positions include 61-63 (DHH) and 78-81 (STHE).

It belongs to the pterin-4-alpha-carbinolamine dehydratase family. Homotetramer and homodimer. In terms of tissue distribution, the major tissues expressing cDcoH are hypothalamus, kidney and liver.

The protein resides in the cytoplasm. It is found in the nucleus. It catalyses the reaction (4aS,6R)-4a-hydroxy-L-erythro-5,6,7,8-tetrahydrobiopterin = (6R)-L-erythro-6,7-dihydrobiopterin + H2O. Its function is as follows. Involved in tetrahydrobiopterin biosynthesis. Seems to both prevent the formation of 7-pterins and accelerate the formation of quinonoid-BH2. Coactivator for HNF1A-dependent transcription. Regulates the dimerization of homeodomain protein HNF1A and enhances its transcriptional activity. Also acts as a coactivator for HNF1B-dependent transcription. The sequence is that of Pterin-4-alpha-carbinolamine dehydratase (PCBD1) from Gallus gallus (Chicken).